Here is a 485-residue protein sequence, read N- to C-terminus: GlcNAc-binding protein A (485 aa).

A signal peptide spans 1–23 (MKKQPKMTAIALILSGISGLAYG). Positions 24-201 (HGYVSAVENG…SFYNVIDVKF (178 aa)) constitute a Chitin-binding type-4 domain. The 42-residue stretch at 437-478 (AGTKVLASDGAIYQCKPWPYSGYCQQWTSNATQYQPGTGSHW) folds into the Chitin-binding type-3 domain.

It belongs to the GbpA family.

The protein localises to the secreted. In terms of biological role, probably interacts with GlcNAc residues. May promote attachment to both epithelial cell surfaces and chitin. The sequence is that of GlcNAc-binding protein A from Vibrio cholerae serotype O1 (strain M66-2).